We begin with the raw amino-acid sequence, 1877 residues long: Neuron navigator 1 (1877 aa).

An N-acetylmethionine modification is found at Met1. The interval Met1–Ala59 is disordered. Positions Arg32–Gly41 are enriched in low complexity. Ser90, Ser142, and Ser152 each carry phosphoserine. Positions Asp114–Glu225 are disordered. Thr159 carries the post-translational modification Phosphothreonine. Residues Ser194 and Ser199 each carry the phosphoserine modification. Positions Ser205 to Ser214 are enriched in low complexity. Positions Glu255–Arg280 form a coiled coil. Residues Tyr294–Ser336 are disordered. Residues Ser296, Ser308, Ser312, Ser362, and Ser391 each carry the phosphoserine modification. A compositionally biased stretch (low complexity) spans Pro301–Ser315. Disordered regions lie at residues Lys386 to Ser839 and Met892 to Leu989. 2 stretches are compositionally biased toward low complexity: residues Asp411 to Asp425 and Asn433 to Ser448. 4 positions are modified to phosphoserine: Ser452, Ser474, Ser476, and Ser490. Over residues Ser476–Tyr486 the composition is skewed to basic and acidic residues. The segment covering Glu503 to Lys519 has biased composition (basic and acidic residues). Residue Ser528 is modified to Phosphoserine. At Thr534 the chain carries Phosphothreonine. Ser541 is subject to Phosphoserine. Residue Thr544 is modified to Phosphothreonine. Residues Gly555 to Lys566 are compositionally biased toward basic and acidic residues. Thr572 carries the post-translational modification Phosphothreonine. Basic and acidic residues predominate over residues Ala581–Lys591. Composition is skewed to polar residues over residues Gly615 to Ser635 and Arg645 to Ala655. The residue at position 648 (Ser648) is a Phosphoserine. Arg688 is modified (omega-N-methylarginine). Polar residues-rich tracts occupy residues Ile698–Leu710 and Gly724–Gln733. A coiled-coil region spans residues Val731–Lys756. Phosphoserine is present on residues Ser750, Ser754, Ser760, Ser797, and Ser808. The segment covering Asp751–Thr773 has biased composition (polar residues). The segment covering Asn805–Thr818 has biased composition (low complexity). Pro residues predominate over residues Thr902 to Ala913. Residue Ser1000 is modified to Phosphoserine. Residue Thr1006 is modified to Phosphothreonine. Residues Ser1072–Ala1163 adopt a coiled-coil conformation. Position 1170 is a phosphothreonine (Thr1170). 4 disordered regions span residues Lys1172–Asp1204, Ala1244–Glu1306, Leu1359–Pro1383, and Lys1810–Ser1843. Ser1181 bears the Phosphoserine mark. Residues Ser1181–Ser1200 are compositionally biased toward low complexity. Over residues Pro1246–Ala1264 the composition is skewed to polar residues. Ser1265 is subject to Phosphoserine. The span at Ser1265–Ser1275 shows a compositional bias: low complexity. Residues Glu1303–Ala1362 are a coiled coil. The span at Ser1366–Pro1383 shows a compositional bias: polar residues. At Ser1382 the chain carries Phosphoserine.

It belongs to the Nav/unc-53 family. In terms of assembly, interacts with tubulin. Broadly expressed at low levels. Expressed at high levels in heart, skeletal muscle and placenta.

The protein resides in the cytoplasm. It is found in the cytoskeleton. May be involved in neuronal migration. This is Neuron navigator 1 (NAV1) from Homo sapiens (Human).